Here is a 209-residue protein sequence, read N- to C-terminus: uncharacterized protein (209 aa).

Helical transmembrane passes span 21–41 (LAYL…VFGL), 81–101 (ILGL…RIAA), 107–127 (VLVN…LYVF), and 159–179 (AAGA…LLFF).

The protein resides in the cell membrane. This is an uncharacterized protein from Bacillus subtilis (strain 168).